Consider the following 372-residue polypeptide: tRNA-specific 2-thiouridylase MnmA (372 aa).

Residues 11–18 and Met-37 contribute to the ATP site; that span reads GMSGGVDS. The tract at residues 97 to 99 is interaction with target base in tRNA; the sequence is NPD. Catalysis depends on Cys-102, which acts as the Nucleophile. Cysteines 102 and 199 form a disulfide. Residue Gly-126 participates in ATP binding. An interaction with tRNA region spans residues 149–151; the sequence is KDQ. Catalysis depends on Cys-199, which acts as the Cysteine persulfide intermediate. The segment at 309–310 is interaction with tRNA; that stretch reads RY.

Belongs to the MnmA/TRMU family.

Its subcellular location is the cytoplasm. It catalyses the reaction S-sulfanyl-L-cysteinyl-[protein] + uridine(34) in tRNA + AH2 + ATP = 2-thiouridine(34) in tRNA + L-cysteinyl-[protein] + A + AMP + diphosphate + H(+). Its function is as follows. Catalyzes the 2-thiolation of uridine at the wobble position (U34) of tRNA, leading to the formation of s(2)U34. This is tRNA-specific 2-thiouridylase MnmA from Staphylococcus aureus (strain Mu50 / ATCC 700699).